The chain runs to 438 residues: Histidine--tRNA ligase (438 aa).

It belongs to the class-II aminoacyl-tRNA synthetase family. In terms of assembly, homodimer.

The protein localises to the cytoplasm. It catalyses the reaction tRNA(His) + L-histidine + ATP = L-histidyl-tRNA(His) + AMP + diphosphate + H(+). The polypeptide is Histidine--tRNA ligase (hisS) (Thermobifida fusca (strain YX)).